The chain runs to 430 residues: ATP-dependent RNA helicase RhlB (430 aa).

The Q motif signature appears at 9–37 (QKFSDFALHPQVIEALESKGFHNCTPIQA). In terms of domain architecture, Helicase ATP-binding spans 40 to 219 (LPLALSGRDV…FEQMNNAEYV (180 aa)). 53 to 60 (AQTGTGKT) contributes to the ATP binding site. The DEAD box signature appears at 165 to 168 (DEAD). In terms of domain architecture, Helicase C-terminal spans 245–390 (RLLQTLLEEE…VSKYNSDALM (146 aa)). The disordered stretch occupies residues 392–430 (DLPAPKRLTRPPRSNNGPRRHNNAPRRSGAPRNNRKRAD).

The protein belongs to the DEAD box helicase family. RhlB subfamily. In terms of assembly, component of the RNA degradosome, which is a multiprotein complex involved in RNA processing and mRNA degradation.

The protein resides in the cytoplasm. The catalysed reaction is ATP + H2O = ADP + phosphate + H(+). Functionally, DEAD-box RNA helicase involved in RNA degradation. Has RNA-dependent ATPase activity and unwinds double-stranded RNA. This Pectobacterium carotovorum subsp. carotovorum (strain PC1) protein is ATP-dependent RNA helicase RhlB.